The sequence spans 463 residues: RuvB-like 2 (463 aa).

N-acetylalanine is present on A2. K9 is covalently cross-linked (Glycyl lysine isopeptide (Lys-Gly) (interchain with G-Cter in SUMO2)). 77 to 84 (GQPGTGKT) serves as a coordination point for ATP. S437 carries the post-translational modification Phosphoserine. Residues K444 and K456 each participate in a glycyl lysine isopeptide (Lys-Gly) (interchain with G-Cter in SUMO2) cross-link.

Belongs to the RuvB family. As to quaternary structure, forms homohexameric rings. Can form a dodecamer with RUVBL1 made of two stacked hexameric rings; however, even though RUVBL1 and RUVBL2 are present in equimolar ratio, the oligomeric status of each hexamer is not known. Oligomerization may regulate binding to nucleic acids and conversely, binding to nucleic acids may affect the dodecameric assembly. Interaction of the complex with DHX34 results in conformational changes of the N-terminus of the RUVBL2 subunits, resulting in loss of nucleotide binding ability and ATP hydrolysis of the complex. Interacts with the transcriptional activation domain of MYC. Interacts with ATF2. Component of the RNA polymerase II holoenzyme complex. May also act to bridge the LEF1/TCF1-CTNNB1 complex and TBP. Component of the NuA4 histone acetyltransferase complex which contains the catalytic subunit KAT5/TIP60 and the subunits EP400, TRRAP/PAF400, BRD8/SMAP, EPC1, DMAP1/DNMAP1, RUVBL1/TIP49, RUVBL2, ING3, actin, ACTL6A/BAF53A, MORF4L1/MRG15, MORF4L2/MRGX, MRGBP, YEATS4/GAS41, VPS72/YL1 and MEAF6. The NuA4 complex interacts with MYC and the adenovirus E1A protein. RUVBL2 interacts with EP400. Component of a NuA4-related complex which contains EP400, TRRAP/PAF400, SRCAP, BRD8/SMAP, EPC1, DMAP1/DNMAP1, RUVBL1/TIP49, RUVBL2, actin, ACTL6A/BAF53A, VPS72 and YEATS4/GAS41. Interacts with NPAT. Component of the chromatin-remodeling INO80 complex; specifically part of a complex module associated with the helicase ATP-binding and the helicase C-terminal domain of INO80. Component of some MLL1/MLL complex, at least composed of the core components KMT2A/MLL1, ASH2L, HCFC1/HCF1, WDR5 and RBBP5, as well as the facultative components BACC1, CHD8, E2F6, HSP70, INO80C, KANSL1, LAS1L, MAX, MCRS1, MGA, MYST1/MOF, PELP1, PHF20, PRP31, RING2, RUVB1/TIP49A, RUVB2/TIP49B, SENP3, TAF1, TAF4, TAF6, TAF7, TAF9 and TEX10. Interacts with IGHMBP2. Interacts with TELO2. Interacts with HINT1. Component of a SWR1-like complex. Component of the R2TP complex composed at least of RUVBL1, RUVBL2, RPAP3 and PIHD1. Component of the PAQosome complex which is responsible for the biogenesis of several protein complexes and which consists of R2TP complex members RUVBL1, RUVBL2, RPAP3 and PIH1D1, URI complex members PFDN2, PFDN6, PDRG1, UXT and URI1 as well as ASDURF, POLR2E and DNAAF10/WDR92. Interacts with ITFG1. Interacts with ZMYND10. Interacts with WAC; WAC positively regulates MTOR activity by promoting the assembly of the TTT complex composed of TELO2, TTI1 and TTI2 and the RUVBL complex composed of RUVBL1 and RUVBL2 into the TTT-RUVBL complex which leads to the dimerization of the mTORC1 complex and its subsequent activation. Forms a complex with APPL1 and APPL2. Interacts with ZNHIT2 (via HIT-type zinc finger) in the presence of ATP or ADP; shows a stronger interaction in the presence of ADP. The RUVBL1/RUVBL2 complex interacts with ZNHIT1 (via HIT-type zinc finger), ZNHIT3 (via HIT-type zinc finger), ZNHIT6 (via HIT-type zinc finger) and DDX59/ZNHIT5 (via HIT-type zinc finger) in the presence of ADP. Interacts with NOPCHAP1; the interaction is direct and disrupted upon ATP binding. Interacts with SMG1. (Microbial infection) Interacts with Mumps L polymerase; this interaction regulates the viral transcription. Ubiquitously expressed. Highly expressed in testis and thymus.

It localises to the nucleus matrix. Its subcellular location is the nucleus. It is found in the nucleoplasm. The protein localises to the cytoplasm. The protein resides in the membrane. It localises to the dynein axonemal particle. The enzyme catalyses ATP + H2O = ADP + phosphate + H(+). In terms of biological role, possesses single-stranded DNA-stimulated ATPase and ATP-dependent DNA helicase (5' to 3') activity; hexamerization is thought to be critical for ATP hydrolysis and adjacent subunits in the ring-like structure contribute to the ATPase activity. Component of the NuA4 histone acetyltransferase complex which is involved in transcriptional activation of select genes principally by acetylation of nucleosomal histones H4 and H2A. This modification may both alter nucleosome -DNA interactions and promote interaction of the modified histones with other proteins which positively regulate transcription. This complex may be required for the activation of transcriptional programs associated with oncogene and proto-oncogene mediated growth induction, tumor suppressor mediated growth arrest and replicative senescence, apoptosis, and DNA repair. The NuA4 complex ATPase and helicase activities seem to be, at least in part, contributed by the association of RUVBL1 and RUVBL2 with EP400. NuA4 may also play a direct role in DNA repair when recruited to sites of DNA damage. Component of a SWR1-like complex that specifically mediates the removal of histone H2A.Z/H2AZ1 from the nucleosome. Proposed core component of the chromatin remodeling INO80 complex which exhibits DNA- and nucleosome-activated ATPase activity and catalyzes ATP-dependent nucleosome sliding. Plays an essential role in oncogenic transformation by MYC and also modulates transcriptional activation by the LEF1/TCF1-CTNNB1 complex. May also inhibit the transcriptional activity of ATF2. Involved in the endoplasmic reticulum (ER)-associated degradation (ERAD) pathway where it negatively regulates expression of ER stress response genes. May play a role in regulating the composition of the U5 snRNP complex. This chain is RuvB-like 2 (RUVBL2), found in Homo sapiens (Human).